The sequence spans 602 residues: Elongation factor 4 (602 aa).

The 182-residue stretch at 8 to 189 (KNIRNFSIIA…KIITTIPAPS (182 aa)) folds into the tr-type G domain. GTP-binding positions include 20-25 (DHGKST) and 136-139 (NKID).

The protein belongs to the TRAFAC class translation factor GTPase superfamily. Classic translation factor GTPase family. LepA subfamily.

It is found in the cell inner membrane. The enzyme catalyses GTP + H2O = GDP + phosphate + H(+). Its function is as follows. Required for accurate and efficient protein synthesis under certain stress conditions. May act as a fidelity factor of the translation reaction, by catalyzing a one-codon backward translocation of tRNAs on improperly translocated ribosomes. Back-translocation proceeds from a post-translocation (POST) complex to a pre-translocation (PRE) complex, thus giving elongation factor G a second chance to translocate the tRNAs correctly. Binds to ribosomes in a GTP-dependent manner. This Helicobacter pylori (strain ATCC 700392 / 26695) (Campylobacter pylori) protein is Elongation factor 4.